We begin with the raw amino-acid sequence, 88 residues long: MATIPVNPKPFLNNLTGKTVIVKLKWGMEYKGFLASVDSYMNLQLGNTEEYIDGQLTGNLGEILIRCNNVLYVRGVPEDEELEDADQD.

Residues 7-79 (NPKPFLNNLT…VLYVRGVPED (73 aa)) form the Sm domain.

Belongs to the snRNP Sm proteins family. SmF/LSm6 subfamily.

Its subcellular location is the nucleus. Its function is as follows. Probable common Sm protein, is found in U1 and U2 snRNPs and may be part of the spliceosome. This chain is Probable small nuclear ribonucleoprotein F, found in Arabidopsis thaliana (Mouse-ear cress).